We begin with the raw amino-acid sequence, 587 residues long: Aspartate--tRNA ligase (587 aa).

Residue glutamate 174 participates in L-aspartate binding. Residues 198-201 are aspartate; sequence QITK. An L-aspartate-binding site is contributed by arginine 220. ATP-binding positions include 220–222 and glutamine 229; that span reads RDE. Histidine 443 is an L-aspartate binding site. Residue glutamate 477 participates in ATP binding. Arginine 484 is a binding site for L-aspartate. Residue 529-532 participates in ATP binding; it reads GLDR.

It belongs to the class-II aminoacyl-tRNA synthetase family. Type 1 subfamily. As to quaternary structure, homodimer.

The protein resides in the cytoplasm. It carries out the reaction tRNA(Asp) + L-aspartate + ATP = L-aspartyl-tRNA(Asp) + AMP + diphosphate. Functionally, catalyzes the attachment of L-aspartate to tRNA(Asp) in a two-step reaction: L-aspartate is first activated by ATP to form Asp-AMP and then transferred to the acceptor end of tRNA(Asp). In Streptococcus pneumoniae serotype 4 (strain ATCC BAA-334 / TIGR4), this protein is Aspartate--tRNA ligase.